The chain runs to 70 residues: UPF0337 protein BC_3635 (70 aa).

Belongs to the UPF0337 (CsbD) family.

This chain is UPF0337 protein BC_3635, found in Bacillus cereus (strain ATCC 14579 / DSM 31 / CCUG 7414 / JCM 2152 / NBRC 15305 / NCIMB 9373 / NCTC 2599 / NRRL B-3711).